The sequence spans 142 residues: Large ribosomal subunit protein uL13 (142 aa).

The protein belongs to the universal ribosomal protein uL13 family. In terms of assembly, part of the 50S ribosomal subunit.

Functionally, this protein is one of the early assembly proteins of the 50S ribosomal subunit, although it is not seen to bind rRNA by itself. It is important during the early stages of 50S assembly. This chain is Large ribosomal subunit protein uL13, found in Salmonella agona (strain SL483).